The primary structure comprises 424 residues: NuA4 complex subunit EAF3 homolog (424 aa).

The Tudor-knot domain occupies Val-23–Val-73. Residues Ala-88–Cys-243 are disordered. Residues Lys-97–Ala-106 are compositionally biased toward basic residues. Residues Lys-107–Ser-116 show a composition bias toward basic and acidic residues. Ser-119 carries the post-translational modification Phosphoserine. Low complexity predominate over residues Ser-122–Ser-165. A phosphothreonine mark is found at Thr-175, Thr-183, Thr-196, and Thr-197. Ser-211 bears the Phosphoserine mark. The segment covering Thr-232–Pro-242 has biased composition (low complexity). Thr-235 is modified (phosphothreonine). Residues Ala-252 to Gln-424 form the MRG domain.

As to quaternary structure, component of the Tip60 chromatin-remodeling complex which contains the catalytic subunit Tip60 and the subunits Domino, Tra1, Brd8, E(Pc), DMAP1, Pontin, Reptin, Ing3, Act87E, BAP55, Mrg15, MrgBP, Gas41 and YL-1.

It localises to the nucleus. Functionally, part of the Tip60 chromatin-remodeling complex which is involved in DNA repair. Upon induction of DNA double-strand breaks, this complex acetylates phosphorylated H2AV in nucleosomes and exchanges it with unmodified H2AV. The protein is NuA4 complex subunit EAF3 homolog (MRG15) of Drosophila melanogaster (Fruit fly).